We begin with the raw amino-acid sequence, 253 residues long: Dof zinc finger protein DOF3.4 (253 aa).

The segment at 30 to 84 (LPCPRCDSSNTKFCYYNNYNFSQPRHFCKACRRYWTHGGTLRDVPVGGGTRKSAK) adopts a Dof-type zinc-finger fold. Residues C32, C35, C57, and C60 each contribute to the Zn(2+) site. The segment at 73–103 (VPVGGGTRKSAKRSRTCSNSSSSSVSGVVSN) is disordered. Residues 90–103 (SNSSSSSVSGVVSN) show a composition bias toward low complexity.

In terms of assembly, interacts with OBF4 or OBF5. As to expression, constitutively expressed in the whole plant.

The protein localises to the nucleus. In terms of biological role, transcription factor that binds specifically to a 5'-AA[AG]G-3' consensus core sequence. Enhances the DNA binding of OBF transcription factors to OCS elements. In Arabidopsis thaliana (Mouse-ear cress), this protein is Dof zinc finger protein DOF3.4 (DOF3.4).